Consider the following 230-residue polypeptide: Probable methylthioribulose-1-phosphate dehydratase (230 aa).

Cys-87 is a binding site for substrate. Zn(2+) contacts are provided by His-105 and His-107. The active-site Proton donor/acceptor is the Glu-129. His-185 contacts Zn(2+).

The protein belongs to the aldolase class II family. MtnB subfamily. It depends on Zn(2+) as a cofactor.

The protein resides in the cytoplasm. The enzyme catalyses 5-(methylsulfanyl)-D-ribulose 1-phosphate = 5-methylsulfanyl-2,3-dioxopentyl phosphate + H2O. It functions in the pathway amino-acid biosynthesis; L-methionine biosynthesis via salvage pathway; L-methionine from S-methyl-5-thio-alpha-D-ribose 1-phosphate: step 2/6. Catalyzes the dehydration of methylthioribulose-1-phosphate (MTRu-1-P) into 2,3-diketo-5-methylthiopentyl-1-phosphate (DK-MTP-1-P). The chain is Probable methylthioribulose-1-phosphate dehydratase from Drosophila virilis (Fruit fly).